The primary structure comprises 1435 residues: Gag-Pol polyprotein (1435 aa).

G2 carries the N-myristoyl glycine; by host lipid modification. Residues 7–31 (VLSGGKLDRWEKIRLRPGGKKKYKL) form an interaction with Gp41 region. The segment at 8 to 43 (LSGGKLDRWEKIRLRPGGKKKYKLKHIVWASRELER) is interaction with host CALM1. Positions 12–19 (KLDRWEKI) are interaction with host AP3D1. Residues 14–33 (DRWEKIRLRPGGKKKYKLKH) are interaction with membrane phosphatidylinositol 4,5-bisphosphate and RNA. The Nuclear export signal signature appears at 16-22 (WEKIRLR). A Nuclear localization signal motif is present at residues 26-32 (KKKYKLK). Residues 73–77 (EECRS) are interaction with membrane phosphatidylinositol 4,5-bisphosphate. The segment at 107–128 (EQNKSKKKAQQAAADTGHSSQV) is disordered. Y132 is modified (phosphotyrosine; by host). An interaction with human PPIA/CYPA and NUP153 region spans residues 189–227 (NTVGGHQAAMQMLKETINEEAAEWDRVHPVHAGPIAPGQ). A dimerization/Multimerization of capsid protein p24 region spans residues 277 to 363 (YSPTSILDIR…GGPGHKARVL (87 aa)). 2 CCHC-type zinc fingers span residues 390 to 407 (VKCF…NCRA) and 411 to 428 (KGCW…DCTE). The tract at residues 449 to 481 (SSEQTRANSPTRRELQVWGRDNNSPSEAGADRQ) is disordered. A dimerization of protease region spans residues 489-493 (PQITL). Residues 508 to 577 (KEALLDTGAD…TPVNIIGRNL (70 aa)) form the Peptidase A2 domain. D513 functions as the For protease activity; shared with dimeric partner in the catalytic mechanism. Dimerization of protease regions lie at residues 537-543 (GIGGFIK) and 576-588 (NLLT…LNFP). The Reverse transcriptase domain maps to 631–821 (EGKISKIGPE…PPFLWMGYEL (191 aa)). Mg(2+) contacts are provided by D697, D772, and D773. An RT 'primer grip' region spans residues 814 to 822 (FLWMGYELH). Residues 985 to 1001 (WETWWTEYWQATWIPEW) carry the Tryptophan repeat motif motif. The RNase H type-1 domain occupies 1021 to 1144 (IVGAETFYVD…VDKLVSAGIR (124 aa)). Residues D1030, E1065, D1085, and D1136 each coordinate Mg(2+). An Integrase-type zinc finger spans residues 1150–1191 (DGIDKAQDEHEKYHSNWRAMASDFNLPPVVAKEIVASCDKCQ). Zn(2+) contacts are provided by H1159, H1163, C1187, and C1190. In terms of domain architecture, Integrase catalytic spans 1201–1351 (VDCSPGIWQL…SAGERIVDII (151 aa)). 3 residues coordinate Mg(2+): D1211, D1263, and E1299. Positions 1370–1417 (FRVYYRDSRNPLWKGPAKLLWKGEGAVVIQDNSDIKVVPRRKAKIIRD) form a DNA-binding region, integrase-type.

In terms of assembly, homotrimer; further assembles as hexamers of trimers. Interacts with gp41 (via C-terminus). Interacts with host CALM1; this interaction induces a conformational change in the Matrix protein, triggering exposure of the myristate group. Interacts with host AP3D1; this interaction allows the polyprotein trafficking to multivesicular bodies during virus assembly. Part of the pre-integration complex (PIC) which is composed of viral genome, matrix protein, Vpr and integrase. Homodimer; the homodimer further multimerizes as homohexamers or homopentamers. Interacts with human PPIA/CYPA; This interaction stabilizes the capsid. Interacts with human NUP153. Interacts with host PDZD8; this interaction stabilizes the capsid. Interacts with monkey TRIM5; this interaction destabilizes the capsid. As to quaternary structure, homodimer, whose active site consists of two apposed aspartic acid residues. In terms of assembly, heterodimer of p66 RT and p51 RT (RT p66/p51). Heterodimerization of RT is essential for DNA polymerase activity. The overall folding of the subdomains is similar in p66 RT and p51 RT but the spatial arrangements of the subdomains are dramatically different. Homotetramer; may further associate as a homohexadecamer. Part of the pre-integration complex (PIC) which is composed of viral genome, matrix protein, Vpr and integrase. Interacts with human SMARCB1/INI1 and human PSIP1/LEDGF isoform 1. Interacts with human KPNA3; this interaction might play a role in nuclear import of the pre-integration complex. Interacts with human NUP153; this interaction might play a role in nuclear import of the pre-integration complex. Requires Mg(2+) as cofactor. In terms of processing, specific enzymatic cleavages by the viral protease yield mature proteins. The protease is released by autocatalytic cleavage. The polyprotein is cleaved during and after budding, this process is termed maturation. Proteolytic cleavage of p66 RT removes the RNase H domain to yield the p51 RT subunit. Nucleocapsid protein p7 might be further cleaved after virus entry. Tyrosine phosphorylated presumably in the virion by a host kinase. Phosphorylation is apparently not a major regulator of membrane association. Post-translationally, phosphorylated possibly by host MAPK1; this phosphorylation is necessary for Pin1-mediated virion uncoating. In terms of processing, methylated by host PRMT6, impairing its function by reducing RNA annealing and the initiation of reverse transcription.

It localises to the host cell membrane. The protein resides in the host endosome. The protein localises to the host multivesicular body. It is found in the virion membrane. Its subcellular location is the host nucleus. It localises to the host cytoplasm. The protein resides in the virion. It carries out the reaction Specific for a P1 residue that is hydrophobic, and P1' variable, but often Pro.. The catalysed reaction is Endohydrolysis of RNA in RNA/DNA hybrids. Three different cleavage modes: 1. sequence-specific internal cleavage of RNA. Human immunodeficiency virus type 1 and Moloney murine leukemia virus enzymes prefer to cleave the RNA strand one nucleotide away from the RNA-DNA junction. 2. RNA 5'-end directed cleavage 13-19 nucleotides from the RNA end. 3. DNA 3'-end directed cleavage 15-20 nucleotides away from the primer terminus.. It catalyses the reaction 3'-end directed exonucleolytic cleavage of viral RNA-DNA hybrid.. The enzyme catalyses DNA(n) + a 2'-deoxyribonucleoside 5'-triphosphate = DNA(n+1) + diphosphate. Protease: The viral protease is inhibited by many synthetic protease inhibitors (PIs), such as amprenavir, atazanavir, indinavir, loprinavir, nelfinavir, ritonavir and saquinavir. Use of protease inhibitors in tritherapy regimens permit more ambitious therapeutic strategies. Reverse transcriptase/ribonuclease H: RT can be inhibited either by nucleoside RT inhibitors (NRTIs) or by non nucleoside RT inhibitors (NNRTIs). NRTIs act as chain terminators, whereas NNRTIs inhibit DNA polymerization by binding a small hydrophobic pocket near the RT active site and inducing an allosteric change in this region. Classical NRTIs are abacavir, adefovir (PMEA), didanosine (ddI), lamivudine (3TC), stavudine (d4T), tenofovir (PMPA), zalcitabine (ddC), and zidovudine (AZT). Classical NNRTIs are atevirdine (BHAP U-87201E), delavirdine, efavirenz (DMP-266), emivirine (I-EBU), and nevirapine (BI-RG-587). The tritherapies used as a basic effective treatment of AIDS associate two NRTIs and one NNRTI. In terms of biological role, mediates, with Gag polyprotein, the essential events in virion assembly, including binding the plasma membrane, making the protein-protein interactions necessary to create spherical particles, recruiting the viral Env proteins, and packaging the genomic RNA via direct interactions with the RNA packaging sequence (Psi). Gag-Pol polyprotein may regulate its own translation, by the binding genomic RNA in the 5'-UTR. At low concentration, the polyprotein would promote translation, whereas at high concentration, the polyprotein would encapsidate genomic RNA and then shut off translation. Functionally, targets the polyprotein to the plasma membrane via a multipartite membrane-binding signal, that includes its myristoylated N-terminus. Matrix protein is part of the pre-integration complex. Implicated in the release from host cell mediated by Vpu. Binds to RNA. Its function is as follows. Forms the conical core that encapsulates the genomic RNA-nucleocapsid complex in the virion. Most core are conical, with only 7% tubular. The core is constituted by capsid protein hexamer subunits. The core is disassembled soon after virion entry. Host restriction factors such as TRIM5-alpha or TRIMCyp bind retroviral capsids and cause premature capsid disassembly, leading to blocks in reverse transcription. Capsid restriction by TRIM5 is one of the factors which restricts HIV-1 to the human species. Host PIN1 apparently facilitates the virion uncoating. On the other hand, interactions with PDZD8 or CYPA stabilize the capsid. Encapsulates and protects viral dimeric unspliced genomic RNA (gRNA). Binds these RNAs through its zinc fingers. Acts as a nucleic acid chaperone which is involved in rearangement of nucleic acid secondary structure during gRNA retrotranscription. Also facilitates template switch leading to recombination. As part of the polyprotein, participates in gRNA dimerization, packaging, tRNA incorporation and virion assembly. In terms of biological role, aspartyl protease that mediates proteolytic cleavages of Gag and Gag-Pol polyproteins during or shortly after the release of the virion from the plasma membrane. Cleavages take place as an ordered, step-wise cascade to yield mature proteins. This process is called maturation. Displays maximal activity during the budding process just prior to particle release from the cell. Also cleaves Nef and Vif, probably concomitantly with viral structural proteins on maturation of virus particles. Hydrolyzes host EIF4GI and PABP1 in order to shut off the capped cellular mRNA translation. The resulting inhibition of cellular protein synthesis serves to ensure maximal viral gene expression and to evade host immune response. Also mediates cleavage of host YTHDF3. Mediates cleavage of host CARD8, thereby activating the CARD8 inflammasome, leading to the clearance of latent HIV-1 in patient CD4(+) T-cells after viral reactivation; in contrast, HIV-1 can evade CARD8-sensing when its protease remains inactive in infected cells prior to viral budding. Functionally, multifunctional enzyme that converts the viral RNA genome into dsDNA in the cytoplasm, shortly after virus entry into the cell. This enzyme displays a DNA polymerase activity that can copy either DNA or RNA templates, and a ribonuclease H (RNase H) activity that cleaves the RNA strand of RNA-DNA heteroduplexes in a partially processive 3' to 5' endonucleasic mode. Conversion of viral genomic RNA into dsDNA requires many steps. A tRNA(3)-Lys binds to the primer-binding site (PBS) situated at the 5'-end of the viral RNA. RT uses the 3' end of the tRNA primer to perform a short round of RNA-dependent minus-strand DNA synthesis. The reading proceeds through the U5 region and ends after the repeated (R) region which is present at both ends of viral RNA. The portion of the RNA-DNA heteroduplex is digested by the RNase H, resulting in a ssDNA product attached to the tRNA primer. This ssDNA/tRNA hybridizes with the identical R region situated at the 3' end of viral RNA. This template exchange, known as minus-strand DNA strong stop transfer, can be either intra- or intermolecular. RT uses the 3' end of this newly synthesized short ssDNA to perform the RNA-dependent minus-strand DNA synthesis of the whole template. RNase H digests the RNA template except for two polypurine tracts (PPTs) situated at the 5'-end and near the center of the genome. It is not clear if both polymerase and RNase H activities are simultaneous. RNase H probably can proceed both in a polymerase-dependent (RNA cut into small fragments by the same RT performing DNA synthesis) and a polymerase-independent mode (cleavage of remaining RNA fragments by free RTs). Secondly, RT performs DNA-directed plus-strand DNA synthesis using the PPTs that have not been removed by RNase H as primers. PPTs and tRNA primers are then removed by RNase H. The 3' and 5' ssDNA PBS regions hybridize to form a circular dsDNA intermediate. Strand displacement synthesis by RT to the PBS and PPT ends produces a blunt ended, linear dsDNA copy of the viral genome that includes long terminal repeats (LTRs) at both ends. Its function is as follows. Catalyzes viral DNA integration into the host chromosome, by performing a series of DNA cutting and joining reactions. This enzyme activity takes place after virion entry into a cell and reverse transcription of the RNA genome in dsDNA. The first step in the integration process is 3' processing. This step requires a complex comprising the viral genome, matrix protein, Vpr and integrase. This complex is called the pre-integration complex (PIC). The integrase protein removes 2 nucleotides from each 3' end of the viral DNA, leaving recessed CA OH's at the 3' ends. In the second step, the PIC enters cell nucleus. This process is mediated through integrase and Vpr proteins, and allows the virus to infect a non dividing cell. This ability to enter the nucleus is specific of lentiviruses, other retroviruses cannot and rely on cell division to access cell chromosomes. In the third step, termed strand transfer, the integrase protein joins the previously processed 3' ends to the 5' ends of strands of target cellular DNA at the site of integration. The 5'-ends are produced by integrase-catalyzed staggered cuts, 5 bp apart. A Y-shaped, gapped, recombination intermediate results, with the 5'-ends of the viral DNA strands and the 3' ends of target DNA strands remaining unjoined, flanking a gap of 5 bp. The last step is viral DNA integration into host chromosome. This involves host DNA repair synthesis in which the 5 bp gaps between the unjoined strands are filled in and then ligated. Since this process occurs at both cuts flanking the HIV genome, a 5 bp duplication of host DNA is produced at the ends of HIV-1 integration. Alternatively, Integrase may catalyze the excision of viral DNA just after strand transfer, this is termed disintegration. The sequence is that of Gag-Pol polyprotein (gag-pol) from Human immunodeficiency virus type 1 group M subtype B (isolate LW123) (HIV-1).